A 220-amino-acid polypeptide reads, in one-letter code: Uracil-DNA glycosylase (220 aa).

D65 serves as the catalytic Proton acceptor.

This sequence belongs to the uracil-DNA glycosylase (UDG) superfamily. UNG family.

It is found in the cytoplasm. The catalysed reaction is Hydrolyzes single-stranded DNA or mismatched double-stranded DNA and polynucleotides, releasing free uracil.. Excises uracil residues from the DNA which can arise as a result of misincorporation of dUMP residues by DNA polymerase or due to deamination of cytosine. This chain is Uracil-DNA glycosylase, found in Bacteroides thetaiotaomicron (strain ATCC 29148 / DSM 2079 / JCM 5827 / CCUG 10774 / NCTC 10582 / VPI-5482 / E50).